The chain runs to 537 residues: Protein ST7 homolog (537 aa).

The chain crosses the membrane as a helical span at residues 15 to 35; sequence FYVALTGTSSLISGLILIFEW. Positions 61–111 are disordered; that stretch reads SDGQSESSNGSGSSSSSGSSSSSNGGAGGGGSGGAGASGSGSATTSTGTQM. Over residues 67–84 the composition is skewed to low complexity; the sequence is SSNGSGSSSSSGSSSSSN. A compositionally biased stretch (gly residues) spans 85–99; the sequence is GGAGGGGSGGAGASG. The span at 100 to 109 shows a compositional bias: low complexity; the sequence is SGSATTSTGT. Residues 472–492 traverse the membrane as a helical segment; it reads LPFFILFTAGLCSITALLALA.

The protein belongs to the ST7 family.

Its subcellular location is the membrane. The polypeptide is Protein ST7 homolog (Drosophila melanogaster (Fruit fly)).